Here is a 326-residue protein sequence, read N- to C-terminus: tRNA-modifying protein YgfZ (326 aa).

Folate is bound by residues tryptophan 27 and tryptophan 189.

This sequence belongs to the tRNA-modifying YgfZ family.

Its subcellular location is the cytoplasm. Its function is as follows. Folate-binding protein involved in regulating the level of ATP-DnaA and in the modification of some tRNAs. It is probably a key factor in regulatory networks that act via tRNA modification, such as initiation of chromosomal replication. This Escherichia coli (strain SMS-3-5 / SECEC) protein is tRNA-modifying protein YgfZ.